Here is a 147-residue protein sequence, read N- to C-terminus: Allograft inflammatory factor 1 (147 aa).

N-acetylserine is present on Ser2. Lys11 carries the N6-acetyllysine modification. Residue Ser39 is modified to Phosphoserine. In terms of domain architecture, EF-hand 1 spans 45–80 (SKLEAFKKKYMEFDLNEDGGIDIMSLKRMMEKLGVP). 3 residues coordinate Ca(2+): Asp58, Asn60, and Asp62. Residues 81 to 115 (KTHLELKKLIMEVSSGPGETFSYSDFLKMMLGKRS) enclose the EF-hand 2; degenerate domain. A disordered region spans residues 128-147 (AREQEKPTGLPAKKAISELP).

In terms of processing, phosphorylated on serine residues.

It localises to the cytoplasm. It is found in the cytoskeleton. The protein resides in the cell projection. Its subcellular location is the ruffle membrane. The protein localises to the phagocytic cup. Functionally, may play a role in macrophage activation and function. The polypeptide is Allograft inflammatory factor 1 (AIF1) (Bos taurus (Bovine)).